An 86-amino-acid chain; its full sequence is Protein YwqI (86 aa).

Residues 57–83 (DYKKAVQKNIEDTKDNVDSLKEQDEAI) adopt a coiled-coil conformation.

In Bacillus subtilis (strain 168), this protein is Protein YwqI (ywqI).